The chain runs to 344 residues: Lipase chaperone (344 aa).

A helical transmembrane segment spans residues 14 to 34 (AAIYGGVGLAAVAGVAMWSGA).

The protein belongs to the lipase chaperone family.

Its subcellular location is the cell inner membrane. May be involved in the folding of the extracellular lipase during its passage through the periplasm. In Burkholderia cenocepacia (strain ATCC BAA-245 / DSM 16553 / LMG 16656 / NCTC 13227 / J2315 / CF5610) (Burkholderia cepacia (strain J2315)), this protein is Lipase chaperone.